The chain runs to 3147 residues: Bassianolide nonribosomal cyclodepsipeptide synthetase (3147 aa).

The span at 1–12 (MEPPNNANTGQL) shows a compositional bias: polar residues. The segment at 1-23 (MEPPNNANTGQLGPTLPNGTVDL) is disordered. Residues 69-454 (HVVYEIPEDV…INKLQSTDGS (386 aa)) form a condensation 1 region. Residues 495-887 (DDTPNKPAVC…GRMDSQVKIR (393 aa)) are adenylation 1. In terms of domain architecture, Carrier 1 spans 1015 to 1091 (PDASAGVTKL…SLQAAIGGSS (77 aa)). Ser1052 carries the O-(pantetheine 4'-phosphoryl)serine modification. The tract at residues 1109 to 1538 (SYSQGRLWFL…QTLISVVPLT (430 aa)) is condensation 2. The adenylation 2 stretch occupies residues 1567-1973 (FATQVASYPD…GRMDFQFKIR (407 aa)). Residues 2041 to 2181 (TYTELDTVSS…FPTRDYLEQV (141 aa)) are S-adenosyl-L-methionine-dependent N-methyltransferase (MT). Carrier domains follow at residues 2515–2589 (FPLS…RQQL) and 2615–2689 (APTT…EVSQ). O-(pantetheine 4'-phosphoryl)serine is present on residues Ser2549 and Ser2649. The tract at residues 2735-3139 (QDVYLATHLQ…THLMEQVCNT (405 aa)) is condensation 3.

This sequence belongs to the NRP synthetase family.

In terms of biological role, bassianolide nonribosomal synthetase that mediates the biosynthesis of bassianolide (BSL), a non-ribosomal cyclodepsipeptide that shows insecticidal and cancer cell antiproliferative activity. BSLS first catalyzes the iterative synthesis of an enzyme-bound dipeptidol monomer intermediate from D-2-hydroxyisovalerate and L-leucine before performing the condensation and cyclization of 4 dipeptidol monomers to yield the cyclic tetrameric ester bassianolide. The N-methyltransferase MT domain is responsible for the methylation of the leucine residues of bassianolide. BSLS is flexible with both the amino acid and hydroxyl acid precursors, and produces bassianolide as the major product (containing N-methyl-L-Leu), together with small amounts of beauvericin and its analogs beauvericins A-C (containing N-methyl-L-Phe). The chain is Bassianolide nonribosomal cyclodepsipeptide synthetase from Beauveria bassiana (strain ARSEF 2860) (White muscardine disease fungus).